Reading from the N-terminus, the 103-residue chain is Large ribosomal subunit protein bL21 (103 aa).

Belongs to the bacterial ribosomal protein bL21 family. Part of the 50S ribosomal subunit. Contacts protein L20.

This protein binds to 23S rRNA in the presence of protein L20. The sequence is that of Large ribosomal subunit protein bL21 from Pseudomonas fluorescens (strain Pf0-1).